We begin with the raw amino-acid sequence, 312 residues long: Methionyl-tRNA formyltransferase (312 aa).

109–112 serves as a coordination point for (6S)-5,6,7,8-tetrahydrofolate; that stretch reads SILP.

The protein belongs to the Fmt family.

The enzyme catalyses L-methionyl-tRNA(fMet) + (6R)-10-formyltetrahydrofolate = N-formyl-L-methionyl-tRNA(fMet) + (6S)-5,6,7,8-tetrahydrofolate + H(+). Its function is as follows. Attaches a formyl group to the free amino group of methionyl-tRNA(fMet). The formyl group appears to play a dual role in the initiator identity of N-formylmethionyl-tRNA by promoting its recognition by IF2 and preventing the misappropriation of this tRNA by the elongation apparatus. The polypeptide is Methionyl-tRNA formyltransferase (Dictyoglomus thermophilum (strain ATCC 35947 / DSM 3960 / H-6-12)).